The following is a 389-amino-acid chain: Oxytocin receptor (389 aa).

The tract at residues 1-27 is disordered; that stretch reads MEGELAANWSTEAVNSSAAPPGAEGNC. The Extracellular segment spans residues 1–38; sequence MEGELAANWSTEAVNSSAAPPGAEGNCTAGPPRRNEAL. N-linked (GlcNAc...) asparagine glycans are attached at residues Asn8, Asn15, and Asn26. The segment covering 8-18 has biased composition (polar residues); the sequence is NWSTEAVNSSA. Residues 39-63 form a helical membrane-spanning segment; sequence ARVEVAVLCLILFLALSGNACVLLA. The Cytoplasmic segment spans residues 64-74; that stretch reads LRTTRHKHSRL. A helical transmembrane segment spans residues 75-97; sequence FFFMKHLSIADLVVAVFQVLPQL. At 98 to 113 the chain is on the extracellular side; it reads LWDITFRFYGPDLLCR. A disulfide bond links Cys112 and Cys187. The helical transmembrane segment at 114 to 135 threads the bilayer; it reads LVKYLQVVGMFASTYLLLLMSL. Residues 136-154 lie on the Cytoplasmic side of the membrane; the sequence is DRCLAICQPLRSLRRRTDR. Residues 155–175 traverse the membrane as a helical segment; that stretch reads LAVLATWLGCLVASAPQVHIF. Residues 176-202 lie on the Extracellular side of the membrane; sequence SLREVADGVFDCWAVFIQPWGPKAYIT. A helical membrane pass occupies residues 203-225; that stretch reads WITLAVYIVPVIVLAACYGLISF. Topologically, residues 226 to 275 are cytoplasmic; it reads KIWQNLRLKTAAAAAAEAPEGAAAGDGGRMALARVSSVKLISKAKIRTVK. A helical transmembrane segment spans residues 276–294; it reads MTFIIVLAFIVCWTPFFFV. Residues 295-309 are Extracellular-facing; sequence QMWSVWDANAPKEAS. Residues 310 to 332 form a helical membrane-spanning segment; sequence AFIIVMLLASLNSCCNPWIYMLF. Over 333–389 the chain is Cytoplasmic; it reads TGHLFHELVQRFLCCSASYLKGNRLGETSTSKKSNSSSFVLSHRSSSQRSCSQPSTA. The segment at 358–389 is disordered; the sequence is GETSTSKKSNSSSFVLSHRSSSQRSCSQPSTA. Over residues 360-389 the composition is skewed to low complexity; sequence TSTSKKSNSSSFVLSHRSSSQRSCSQPSTA. Phosphoserine is present on residues Ser366 and Ser368.

It belongs to the G-protein coupled receptor 1 family. Vasopressin/oxytocin receptor subfamily.

It is found in the cell membrane. Functionally, receptor for oxytocin. The activity of this receptor is mediated by G proteins which activate a phosphatidylinositol-calcium second messenger system. The polypeptide is Oxytocin receptor (OXTR) (Macaca mulatta (Rhesus macaque)).